A 239-amino-acid polypeptide reads, in one-letter code: Probable transcriptional regulator ycf27 (239 aa).

Positions 7-120 constitute a Response regulatory domain; sequence KILVVDDEIS…ELEARIRSLL (114 aa). Residue Asp56 is modified to 4-aspartylphosphate. The segment at residues 76-94 is a DNA-binding region (H-T-H motif); the sequence is DIPIIMLTALGDVADRITG. The ompR/PhoB-type DNA-binding region spans 135 to 236; that stretch reads GENLQIGFLK…ARGIGYLFQN (102 aa).

The protein resides in the plastid. It is found in the cyanelle. In terms of biological role, probable promoter-specific protein mediating the interaction between DNA and RNA polymerase. The polypeptide is Probable transcriptional regulator ycf27 (ycf27) (Cyanophora paradoxa).